The chain runs to 292 residues: Insulin-like growth factor-binding protein 3 (292 aa).

Residues 1-27 (MHPARPALWAAALTALTLLRGPPVARA) form the signal peptide. One can recognise an IGFBP N-terminal domain in the interval 36–119 (PVVRCEPCDA…LNGRGFCANA (84 aa)). Cystine bridges form between Cys-40–Cys-69, Cys-43–Cys-71, Cys-51–Cys-72, Cys-60–Cys-75, Cys-83–Cys-96, and Cys-90–Cys-116. Residues Asn-118 and Asn-137 are each glycosylated (N-linked (GlcNAc...) asparagine). Disordered regions lie at residues 128–152 (YLPSQPAPGNISESEEEHNAGSVES) and 178–212 (KGHARDSQRYKVDYESQSTDTQNFSSESKRETEYG). At Ser-149 the chain carries Phosphoserine. Basic and acidic residues predominate over residues 178–191 (KGHARDSQRYKVDY). Over residues 192–203 (ESQSTDTQNFSS) the composition is skewed to polar residues. Asn-200 is a glycosylation site (N-linked (GlcNAc...) asparagine). Phosphoserine is present on Ser-202. Residues 211–286 (YGPCRREMED…DTKGKDDVHC (76 aa)) enclose the Thyroglobulin type-1 domain. Disulfide bonds link Cys-214–Cys-241, Cys-252–Cys-263, and Cys-265–Cys-286.

In terms of assembly, interacts with XLKD1. Binds IGF2 more than IGF1. Forms a ternary complex of about 140 to 150 kDa with IGF1 or IGF2 and a 85 kDa glycoprotein (ALS). Interacts with TMEM219. Phosphorylated by FAM20C in the extracellular medium.

The protein localises to the secreted. Functionally, IGF-binding proteins prolong the half-life of the IGFs and have been shown to either inhibit or stimulate the growth promoting effects of the IGFs on cell culture. They alter the interaction of IGFs with their cell surface receptors. Also exhibits IGF-independent antiproliferative and apoptotic effects mediated by its receptor TMEM219/IGFBP-3R. Promotes testicular germ cell apoptosis. The sequence is that of Insulin-like growth factor-binding protein 3 (Igfbp3) from Mus musculus (Mouse).